Consider the following 314-residue polypeptide: uncharacterized protein (314 aa).

10 consecutive transmembrane segments (helical) span residues 4-23 (FFIGDLLPIIVIMLLGYFSG), 36-53 (FNKLVLNYALPAALFVSI), 68-90 (TLVSLVVIVGCFFFSWFGCYKFF), 97-116 (AAVCALIAGSPTIGFLGFAV), 131-153 (VAIISIIVNAITIPIGLYLLNPS), 174-196 (PVVWAPVLATILVLVGVKIPAAW), 200-222 (FNLIAKANSGVAVFAAGLTLAAH), 229-251 (EIAYNTFLKLILMPLALLLVGMA), 261-283 (MMVLAGALPPAFSGIIIASRFNV), and 290-309 (ASLAVSVLGFVVTAPLWIYV).

This sequence belongs to the auxin efflux carrier (TC 2.A.69) family.

Its subcellular location is the cell membrane. This is an uncharacterized protein from Escherichia coli O157:H7.